The chain runs to 707 residues: Molybdenum cofactor sulfurase (707 aa).

Lysine 206 bears the N6-(pyridoxal phosphate)lysine mark. Cysteine 365 is a catalytic residue. The MOSC domain occupies 558–705 (QWLENALDMT…VEAGSAVRFF (148 aa)).

This sequence belongs to the class-V pyridoxal-phosphate-dependent aminotransferase family. MOCOS subfamily. The cofactor is pyridoxal 5'-phosphate.

The enzyme catalyses Mo-molybdopterin + L-cysteine + AH2 = thio-Mo-molybdopterin + L-alanine + A + H2O. It participates in cofactor biosynthesis; molybdopterin biosynthesis. Sulfurates the molybdenum cofactor. Sulfation of molybdenum is essential for xanthine dehydrogenase (XDH) and aldehyde oxidase (ADO) enzymes in which molybdenum cofactor is liganded by 1 oxygen and 1 sulfur atom in active form. The chain is Molybdenum cofactor sulfurase (mocs-1) from Caenorhabditis briggsae.